We begin with the raw amino-acid sequence, 347 residues long: Metacaspase-2 (347 aa).

The tract at residues 1-70 (MCSLITQLCD…QPWVATPLPG (70 aa)) is regulates substrate access to the active site. His158 is a catalytic residue. Residues Asp173, Asp189, and Asp190 each coordinate Ca(2+). Cys213 is a catalytic residue. Asp220 is a binding site for Ca(2+).

This sequence belongs to the peptidase C14B family. In terms of assembly, monomer. In terms of processing, auto-proteolytic cleavage of the propeptide after Lys-55 and between the large and small subunits after Lys-268 is required for catalytic activity towards large protein substrates but is dispensable towards small oligopeptide substrates. After processing, the propeptide and the large and small subunits remain associated by non-covalent bonds. In vivo, the unprocessed enzyme appears to be the predominant form.

Its subcellular location is the recycling endosome. With respect to regulation, activated by Ca(2+). In response to calcium binding, the 280-loop, the 280-loop, a disordered loop consisting of residues 269-275, undergoes a conformational change which stabilizes substrates in the active site. The binding to the substrate triggers the release of the N-terminal region resulting in the activation of the enzyme. Proteolytic cleavage is required for catalytic activity towards large protein substrates. Its function is as follows. Cysteine protease that cleaves specifically after arginine or lysine residues. This is Metacaspase-2 from Trypanosoma brucei brucei.